An 88-amino-acid polypeptide reads, in one-letter code: Small ribosomal subunit protein uS17 (88 aa).

The protein belongs to the universal ribosomal protein uS17 family. In terms of assembly, part of the 30S ribosomal subunit.

Functionally, one of the primary rRNA binding proteins, it binds specifically to the 5'-end of 16S ribosomal RNA. In Brevibacillus brevis (strain 47 / JCM 6285 / NBRC 100599), this protein is Small ribosomal subunit protein uS17.